The primary structure comprises 529 residues: Heat shock factor protein 1 (529 aa).

M1 is subject to N-acetylmethionine. Positions 15 to 120 (VPAFLTKLWT…LLENIKRKVT (106 aa)) are DNA-binding domain. K80 bears the N6-acetyllysine mark. K91 bears the N6-acetyllysine; alternate mark. K91 is covalently cross-linked (Glycyl lysine isopeptide (Lys-Gly) (interchain with G-Cter in SUMO2); alternate). Residue K118 is modified to N6-acetyllysine. A Phosphoserine; by MAPKAPK2 modification is found at S121. Residues K126 and K131 each participate in a glycyl lysine isopeptide (Lys-Gly) (interchain with G-Cter in SUMO2) cross-link. The hydrophobic repeat HR-A/B stretch occupies residues 130 to 203 (IKIRQDSVTK…ISLVQSNRIL (74 aa)). T142 carries the post-translational modification Phosphothreonine; by CK2. An N6-acetyllysine mark is found at K150 and K188. Residues 203–224 (LGVKRKIPLMLNDSGSAHSMPK) form a d domain region. An N6-acetyllysine; alternate modification is found at K208. K208 participates in a covalent cross-link: Glycyl lysine isopeptide (Lys-Gly) (interchain with G-Cter in SUMO2); alternate. S216 is modified (phosphoserine; by PLK1). The interval 221 to 310 (SMPKYSRQFS…PPSPPQSPRV (90 aa)) is regulatory domain. A Glycyl lysine isopeptide (Lys-Gly) (interchain with G-Cter in SUMO2) cross-link involves residue K224. Phosphoserine; by CAMK2A is present on S230. A phosphoserine mark is found at S275 and S292. Residues 295-324 (VRVKEEPPSPPQSPRVEEASPGRPSSVDTL) form a disordered region. Residue K298 is modified to N6-acetyllysine; alternate. Residue K298 forms a Glycyl lysine isopeptide (Lys-Gly) (interchain with G-Cter in SUMO2); alternate linkage. A Glycyl lysine isopeptide (Lys-Gly) (interchain with G-Cter in SUMO); alternate cross-link involves residue K298. Residue S303 is modified to Phosphoserine; by GSK3-beta. Phosphoserine; by MAPK3 is present on S307. Residues S314 and S319 each carry the phosphoserine modification. A Phosphoserine; by PKA modification is found at S320. The residue at position 323 (T323) is a Phosphothreonine. Position 326 is a phosphoserine; by MAPK12 (S326). The tract at residues 336–372 (RESEPAPASVTALTDARGHTDTEGRPPSPPPTSTPEK) is disordered. A Phosphoserine modification is found at S344. S363 is subject to Phosphoserine; by MAPK8. Residues 371–529 (EKCLSVACLD…PPKAKDPTVS (159 aa)) form a transactivation domain region. A hydrophobic repeat HR-C region spans residues 384 to 409 (LSDHLDAMDSNLDNLQTMLSSHGFSV). The short motif at 412-420 (SALLDLFSP) is the 9aaTAD element. A Phosphoserine; by PLK1 modification is found at S419. S444 is modified (phosphoserine). Disordered regions lie at residues 444–463 (SPQE…DSGK) and 502–529 (EGDG…PTVS). An N6-acetyllysine modification is found at K524.

Belongs to the HSF family. As to quaternary structure, monomer; cytoplasmic latent and transcriptionally inactive monomeric form in unstressed cells. Homotrimer; in response to stress, such as heat shock, homotrimerizes and translocates into the nucleus, binds to heat shock element (HSE) sequences in promoter of heat shock protein (HSP) genes and acquires transcriptional ability. Interacts (via monomeric form) with FKBP4; this interaction occurs in unstressed cells. Associates (via monomeric form) with HSP90 proteins in a multichaperone complex in unnstressed cell; this association maintains HSF1 in a non-DNA-binding and transcriptional inactive form by preventing HSF1 homotrimerization. Homotrimeric transactivation activity is modulated by protein-protein interactions and post-translational modifications. Interacts with HSP90AA1; this interaction is decreased in a IER5-dependent manner, promoting HSF1 accumulation in the nucleus, homotrimerization and DNA-binding activities. Part (via regulatory domain in the homotrimeric form) of a large heat shock-induced HSP90-dependent multichaperone complex at least composed of FKBP4, FKBP5, HSP90 proteins, PPID, PPP5C and PTGES3; this association maintains the HSF1 homotrimeric DNA-bound form in a transcriptionally inactive form. Interacts with BAG3 (via BAG domain); this interaction occurs in normal and heat-shocked cells promoting nuclear shuttling of HSF1 in a BAG3-dependent manner. Interacts (via homotrimeric and hyperphosphorylated form) with FKBP4; this interaction occurs upon heat shock in a HSP90-dependent multichaperone complex. Interacts (via homotrimeric form preferentially) with EEF1A proteins. In heat shocked cells, stress-denatured proteins compete with HSF1 homotrimeric DNA-bound form for association of the HSP90-dependent multichaperone complex, and hence alleviating repression of HSF1-mediated transcriptional activity. Interacts (via homotrimeric form preferentially) with DAXX; this interaction relieves homotrimeric HSF1 from repression of its transcriptional activity by HSP90-dependent multichaperone complex upon heat shock. Interacts (via D domain and preferentially with hyperphosphorylated form) with JNK1; this interaction occurs under both normal growth conditions and immediately upon heat shock. Interacts (via D domain and preferentially with hyperphosphorylated form) with MAPK3; this interaction occurs upon heat shock. Interacts with IER5 (via central region); this interaction promotes PPP2CA-induced dephosphorylation on Ser-121, Ser-307, Ser-314, Thr-323 and Thr-367 and HSF1 transactivation activity. Found in a ribonucleoprotein complex composed of the HSF1 homotrimeric form, translation elongation factor eEF1A proteins and non-coding RNA heat shock RNA-1 (HSR1); this complex occurs upon heat shock and stimulates HSF1 DNA-binding activity. Interacts (via transactivation domain) with HSPA1A/HSP70 and DNAJB1; these interactions result in the inhibition of heat shock- and HSF1-induced transcriptional activity during the attenuation and recovery phase from heat shock. Interacts (via Ser-303 and Ser-307 phosphorylated form) with YWHAE; this interaction promotes HSF1 sequestration in the cytoplasm in an ERK-dependent manner. Found in a complex with IER5 and PPP2CA. Interacts with TPR; this interaction increases upon heat shock and stimulates export of HSP70 mRNA. Interacts with SYMPK (via N-terminus) and CSTF2; these interactions occur upon heat shock. Interacts (via transactivation domain) with HSPA8. Interacts with EEF1D; this interaction occurs at heat shock promoter element (HSE) sequences. Interacts with MAPKAPK2. Interacts with PRKACA/PKA. Interacts (via transactivation domain) with GTF2A2. Interacts (via transactivation domain) with GTF2B. Interacts (via transactivation domain) with TBP. Interacts with CDK9, CCNT1 and EP300. Interacts (via N-terminus) with XRCC5 (via N-terminus) and XRCC6 (via N-terminus); these interactions are direct and prevent XRCC5/XRCC6 heterodimeric binding and non-homologous end joining (NHEJ) repair activities induced by ionizing radiation (IR). Interacts with PLK1; this interaction occurs during the early mitotic period, increases upon heat shock but does not modulate neither HSF1 homotrimerization and DNA-binding activities. Interacts (via Ser-216 phosphorylated form) with CDC20; this interaction occurs in mitosis in a MAD2L1-dependent manner and prevents PLK1-stimulated degradation of HSF1 by blocking the recruitment of the SCF(BTRC) ubiquitin ligase complex. Interacts with MAD2L1; this interaction occurs in mitosis. Interacts with BTRC; this interaction occurs during mitosis, induces its ubiquitin-dependent degradation following stimulus-dependent phosphorylation at Ser-216, a process inhibited by CDC20. Interacts with HSP90AA1 and HSP90AB1. Forms a complex with TTC5/STRAP and p300/EP300; these interactions augment chromatin-bound HSF1 and p300/EP300 histone acetyltransferase activity. Phosphorylated. Phosphorylated in unstressed cells; this phosphorylation is constitutive and implicated in the repression of HSF1 transcriptional activity. Phosphorylated on Ser-121 by MAPKAPK2; this phosphorylation promotes interaction with HSP90 proteins and inhibits HSF1 homotrimerization, DNA-binding and transactivation activities. Phosphorylation on Ser-303 by GSK3B/GSK3-beta and on Ser-307 by MAPK3 within the regulatory domain is involved in the repression of HSF1 transcriptional activity and occurs in a RAF1-dependent manner. Phosphorylation on Ser-303 and Ser-307 increases HSF1 nuclear export in a YWHAE- and XPO1/CRM1-dependent manner. Phosphorylation on Ser-307 is a prerequisite for phosphorylation on Ser-303. According to PubMed:9535852, Ser-303 is not phosphorylated in unstressed cells. Phosphorylated on Ser-419 by PLK1; phosphorylation promotes nuclear translocation upon heat shock. Hyperphosphorylated upon heat shock and during the attenuation and recovery phase period of the heat shock response. Phosphorylated on Thr-142; this phosphorylation increases HSF1 transactivation activity upon heat shock. Phosphorylation on Ser-230 by CAMK2A; this phosphorylation enhances HSF1 transactivation activity upon heat shock. Phosphorylation on Ser-326 by MAPK12; this phosphorylation enhances HSF1 nuclear translocation, homotrimerization and transactivation activities upon heat shock. Phosphorylated on Ser-320 by PRKACA/PKA; this phosphorylation promotes nuclear localization and transcriptional activity upon heat shock. Phosphorylated on Ser-363 by MAPK8; this phosphorylation occurs upon heat shock, induces HSF1 translocation into nuclear stress bodies and negatively regulates transactivation activity. Neither basal nor stress-inducible phosphorylation on Ser-230, Ser-292, Ser-303, Ser-307, Ser-314, Ser-319, Ser-320, Thr-323, Ser-326, Ser-338, Ser-344, Ser-363, Thr-367, Ser-368 and Thr-369 within the regulatory domain is involved in the regulation of HSF1 subcellular localization or DNA-binding activity; however, it negatively regulates HSF1 transactivation activity. Phosphorylated on Ser-216 by PLK1 in the early mitotic period; this phosphorylation regulates HSF1 localization to the spindle pole, the recruitment of the SCF(BTRC) ubiquitin ligase complex inducing HSF1 degradation, and hence mitotic progression. Dephosphorylated on Ser-121, Ser-307, Ser-314, Thr-323 and Thr-367 by phosphatase PPP2CA in an IER5-dependent manner, leading to HSF1-mediated transactivation activity. In terms of processing, sumoylated with SUMO1 and SUMO2 upon heat shock in a ERK2-dependent manner. Sumoylated by SUMO1 on Lys-298; sumoylation occurs upon heat shock and promotes its localization to nuclear stress bodies and DNA-binding activity. Phosphorylation on Ser-303 and Ser-307 is probably a prerequisite for sumoylation. Post-translationally, acetylated on Lys-118; this acetylation is decreased in a IER5-dependent manner. Acetylated on Lys-118, Lys-208 and Lys-298; these acetylations occur in a EP300-dependent manner. Acetylated on Lys-80; this acetylation inhibits DNA-binding activity upon heat shock. Deacetylated on Lys-80 by SIRT1; this deacetylation increases DNA-binding activity. Ubiquitinated by SCF(BTRC) and degraded following stimulus-dependent phosphorylation at Ser-216 by PLK1 in mitosis. Polyubiquitinated. Undergoes proteasomal degradation upon heat shock and during the attenuation and recovery phase period of the heat shock response.

It is found in the nucleus. Its subcellular location is the cytoplasm. The protein localises to the nucleoplasm. The protein resides in the perinuclear region. It localises to the cytoskeleton. It is found in the spindle pole. Its subcellular location is the microtubule organizing center. The protein localises to the centrosome. The protein resides in the chromosome. It localises to the centromere. It is found in the kinetochore. Its function is as follows. Functions as a stress-inducible and DNA-binding transcription factor that plays a central role in the transcriptional activation of the heat shock response (HSR), leading to the expression of a large class of molecular chaperones, heat shock proteins (HSPs), that protect cells from cellular insult damage. In unstressed cells, is present in a HSP90-containing multichaperone complex that maintains it in a non-DNA-binding inactivated monomeric form. Upon exposure to heat and other stress stimuli, undergoes homotrimerization and activates HSP gene transcription through binding to site-specific heat shock elements (HSEs) present in the promoter regions of HSP genes. Upon heat shock stress, forms a chromatin-associated complex with TTC5/STRAP and p300/EP300 to stimulate HSR transcription, therefore increasing cell survival. Activation is reversible, and during the attenuation and recovery phase period of the HSR, returns to its unactivated form. Binds to inverted 5'-NGAAN-3' pentamer DNA sequences. Binds to chromatin at heat shock gene promoters. Activates transcription of transcription factor FOXR1 which in turn activates transcription of the heat shock chaperones HSPA1A and HSPA6 and the antioxidant NADPH-dependent reductase DHRS2. Also serves several other functions independently of its transcriptional activity. Involved in the repression of Ras-induced transcriptional activation of the c-fos gene in heat-stressed cells. Positively regulates pre-mRNA 3'-end processing and polyadenylation of HSP70 mRNA upon heat-stressed cells in a symplekin (SYMPK)-dependent manner. Plays a role in nuclear export of stress-induced HSP70 mRNA. Plays a role in the regulation of mitotic progression. Also plays a role as a negative regulator of non-homologous end joining (NHEJ) repair activity in a DNA damage-dependent manner. Involved in stress-induced cancer cell proliferation in a IER5-dependent manner. (Microbial infection) Plays a role in latent human immunodeficiency virus (HIV-1) transcriptional reactivation. Binds to the HIV-1 long terminal repeat promoter (LTR) to reactivate viral transcription by recruiting cellular transcriptional elongation factors, such as CDK9, CCNT1 and EP300. This Homo sapiens (Human) protein is Heat shock factor protein 1.